Here is a 244-residue protein sequence, read N- to C-terminus: uncharacterized protein (244 aa).

Transmembrane regions (helical) follow at residues threonine 20–isoleucine 42, phenylalanine 49–valine 67, threonine 82–phenylalanine 101, and alanine 108–isoleucine 125.

The protein resides in the cell membrane. This is an uncharacterized protein from Archaeoglobus fulgidus (strain ATCC 49558 / DSM 4304 / JCM 9628 / NBRC 100126 / VC-16).